Here is a 319-residue protein sequence, read N- to C-terminus: Coproporphyrin III ferrochelatase 2 (319 aa).

Fe-coproporphyrin III is bound by residues Tyr13, Arg30, 46 to 47 (RY), Ser54, and Tyr125. 2 residues coordinate Fe(2+): His181 and Glu262.

This sequence belongs to the ferrochelatase family.

The protein localises to the cytoplasm. It carries out the reaction Fe-coproporphyrin III + 2 H(+) = coproporphyrin III + Fe(2+). It functions in the pathway porphyrin-containing compound metabolism; protoheme biosynthesis. Involved in coproporphyrin-dependent heme b biosynthesis. Catalyzes the insertion of ferrous iron into coproporphyrin III to form Fe-coproporphyrin III. In Bacillus thuringiensis subsp. konkukian (strain 97-27), this protein is Coproporphyrin III ferrochelatase 2.